Here is a 611-residue protein sequence, read N- to C-terminus: Oligoendopeptidase F homolog (611 aa).

Residue His-384 coordinates Zn(2+). Glu-385 is an active-site residue. His-388 and His-391 together coordinate Zn(2+).

It belongs to the peptidase M3B family. Zn(2+) is required as a cofactor.

The sequence is that of Oligoendopeptidase F homolog (pepF) from Mycoplasma pneumoniae (strain ATCC 29342 / M129 / Subtype 1) (Mycoplasmoides pneumoniae).